The following is a 475-amino-acid chain: Methyltransferase-like protein 25B (475 aa).

A coiled-coil region spans residues 185-210 (NKRLVARAQRLDQELLQALDKMEKRH). Residues 406–426 (VVAFFSLALLLAPLVETLILL) traverse the membrane as a helical segment.

It belongs to the METTL25 family.

The protein resides in the membrane. This chain is Methyltransferase-like protein 25B, found in Rattus norvegicus (Rat).